A 231-amino-acid chain; its full sequence is Cytochrome c oxidase subunit 2 (231 aa).

Residues 1 to 14 (MAHPVHVGLKEATS) are Mitochondrial intermembrane-facing. Residues 15 to 45 (PFMEELIAFHDHTLMIIFLISSLVLYIISMM) form a helical membrane-spanning segment. At 46–59 (LTTKLTHTSTMNAQ) the chain is on the mitochondrial matrix side. A helical membrane pass occupies residues 60–87 (EIEIIWTILPAIILIMIALPSLRILYMT). At 88-231 (DEFNKPYLTL…WASYLYIVSL (144 aa)) the chain is on the mitochondrial intermembrane side. Cu cation-binding residues include histidine 161, cysteine 196, glutamate 198, cysteine 200, histidine 204, and methionine 207. Glutamate 198 provides a ligand contact to Mg(2+).

Belongs to the cytochrome c oxidase subunit 2 family. In terms of assembly, component of the cytochrome c oxidase (complex IV, CIV), a multisubunit enzyme composed of 14 subunits. The complex is composed of a catalytic core of 3 subunits MT-CO1, MT-CO2 and MT-CO3, encoded in the mitochondrial DNA, and 11 supernumerary subunits COX4I, COX5A, COX5B, COX6A, COX6B, COX6C, COX7A, COX7B, COX7C, COX8 and NDUFA4, which are encoded in the nuclear genome. The complex exists as a monomer or a dimer and forms supercomplexes (SCs) in the inner mitochondrial membrane with NADH-ubiquinone oxidoreductase (complex I, CI) and ubiquinol-cytochrome c oxidoreductase (cytochrome b-c1 complex, complex III, CIII), resulting in different assemblies (supercomplex SCI(1)III(2)IV(1) and megacomplex MCI(2)III(2)IV(2)). Found in a complex with TMEM177, COA6, COX18, COX20, SCO1 and SCO2. Interacts with TMEM177 in a COX20-dependent manner. Interacts with COX20. Interacts with COX16. It depends on Cu cation as a cofactor.

The protein resides in the mitochondrion inner membrane. It carries out the reaction 4 Fe(II)-[cytochrome c] + O2 + 8 H(+)(in) = 4 Fe(III)-[cytochrome c] + 2 H2O + 4 H(+)(out). Component of the cytochrome c oxidase, the last enzyme in the mitochondrial electron transport chain which drives oxidative phosphorylation. The respiratory chain contains 3 multisubunit complexes succinate dehydrogenase (complex II, CII), ubiquinol-cytochrome c oxidoreductase (cytochrome b-c1 complex, complex III, CIII) and cytochrome c oxidase (complex IV, CIV), that cooperate to transfer electrons derived from NADH and succinate to molecular oxygen, creating an electrochemical gradient over the inner membrane that drives transmembrane transport and the ATP synthase. Cytochrome c oxidase is the component of the respiratory chain that catalyzes the reduction of oxygen to water. Electrons originating from reduced cytochrome c in the intermembrane space (IMS) are transferred via the dinuclear copper A center (CU(A)) of subunit 2 and heme A of subunit 1 to the active site in subunit 1, a binuclear center (BNC) formed by heme A3 and copper B (CU(B)). The BNC reduces molecular oxygen to 2 water molecules using 4 electrons from cytochrome c in the IMS and 4 protons from the mitochondrial matrix. The chain is Cytochrome c oxidase subunit 2 (MT-CO2) from Brachyteles hypoxanthus (Northern muriqui).